Consider the following 262-residue polypeptide: Ribosomal RNA small subunit methyltransferase A (262 aa).

Residues H13, L15, G40, E61, D85, and N103 each contribute to the S-adenosyl-L-methionine site.

The protein belongs to the class I-like SAM-binding methyltransferase superfamily. rRNA adenine N(6)-methyltransferase family. RsmA subfamily.

It localises to the cytoplasm. The enzyme catalyses adenosine(1518)/adenosine(1519) in 16S rRNA + 4 S-adenosyl-L-methionine = N(6)-dimethyladenosine(1518)/N(6)-dimethyladenosine(1519) in 16S rRNA + 4 S-adenosyl-L-homocysteine + 4 H(+). Specifically dimethylates two adjacent adenosines (A1518 and A1519) in the loop of a conserved hairpin near the 3'-end of 16S rRNA in the 30S particle. May play a critical role in biogenesis of 30S subunits. The chain is Ribosomal RNA small subunit methyltransferase A from Bordetella avium (strain 197N).